Consider the following 500-residue polypeptide: Cytochrome P450 2D26 (500 aa).

S249 is modified (phosphoserine). Position 446 (C446) interacts with heme.

This sequence belongs to the cytochrome P450 family. It depends on heme as a cofactor.

It localises to the endoplasmic reticulum membrane. The protein resides in the microsome membrane. It catalyses the reaction an organic molecule + reduced [NADPH--hemoprotein reductase] + O2 = an alcohol + oxidized [NADPH--hemoprotein reductase] + H2O + H(+). Its function is as follows. Cytochromes P450 are a group of heme-thiolate monooxygenases. In liver microsomes, this enzyme is involved in an NADPH-dependent electron transport pathway. It oxidizes a variety of structurally unrelated compounds, including steroids, fatty acids, and xenobiotics. This Mus musculus (Mouse) protein is Cytochrome P450 2D26.